A 339-amino-acid chain; its full sequence is Hairy/enhancer-of-split related with YRPW motif protein 2 (339 aa).

The disordered stretch occupies residues 1–52; that stretch reads MKRPCEETTSESDLDETIDVGSENNYPGHATSSVMRSNSPTTTSQIMARKKR. Residues 8–18 show a composition bias toward acidic residues; the sequence is TTSESDLDETI. Residues 22-46 show a composition bias toward polar residues; that stretch reads SENNYPGHATSSVMRSNSPTTTSQI. Residues 47-116 are transcriptional repression and interaction with NCOR1 and SIN3A; sequence MARKKRRGII…GGKGYFDAHA (70 aa). The 56-residue stretch at 48 to 103 folds into the bHLH domain; sequence ARKKRRGIIEKRRRDRINNSLSELRRLVPTAFEKQGSAKLEKAEILQMTVDHLKML. Residues 122 to 157 enclose the Orange domain; sequence MSIGFRECLTEVARYLSSVEGLDPSDPLRVRLVSHL. Residues 310 to 339 form a disordered region; sequence SVSAASSPQQTSTGTNNKPYQPWGTEVGAF. A compositionally biased stretch (polar residues) spans 318–328; the sequence is QQTSTGTNNKP. The short motif at 329 to 332 is the YQPW motif element; it reads YQPW.

Belongs to the HEY family. As to quaternary structure, may self-associate. Interacts with ARNT. Interacts with GATA4, GATA6, HES1 and HEYL. Interacts with HDAC1, NCOR1 and SIN3A. In terms of tissue distribution, highly expressed in the aorta, lower expression detected in the heart, brain, kidney, lung, muscle, ovary and testis.

It localises to the nucleus. Functionally, transcriptional repressor which functions as a downstream effector of Notch signaling in cardiovascular development. Specifically required for the Notch-induced endocardial epithelial to mesenchymal transition, which is itself criticial for cardiac valve and septum development. May be required in conjunction with HEY1 to specify arterial cell fate or identity. Promotes maintenance of neuronal precursor cells and glial versus neuronal fate specification. Binds preferentially to the canonical E box sequence 5'-CACGTG-3'. Represses transcription by the cardiac transcriptional activators GATA4 and GATA6 and by the neuronal bHLH factors ASCL1/MASH1 and NEUROD4/MATH3. In Mus musculus (Mouse), this protein is Hairy/enhancer-of-split related with YRPW motif protein 2 (Hey2).